Consider the following 396-residue polypeptide: Anhydro-N-acetylmuramic acid kinase (396 aa).

An ATP-binding site is contributed by 21–28 (GTSADGID).

The protein belongs to the anhydro-N-acetylmuramic acid kinase family.

The catalysed reaction is 1,6-anhydro-N-acetyl-beta-muramate + ATP + H2O = N-acetyl-D-muramate 6-phosphate + ADP + H(+). The protein operates within amino-sugar metabolism; 1,6-anhydro-N-acetylmuramate degradation. It functions in the pathway cell wall biogenesis; peptidoglycan recycling. In terms of biological role, catalyzes the specific phosphorylation of 1,6-anhydro-N-acetylmuramic acid (anhMurNAc) with the simultaneous cleavage of the 1,6-anhydro ring, generating MurNAc-6-P. Is required for the utilization of anhMurNAc either imported from the medium or derived from its own cell wall murein, and thus plays a role in cell wall recycling. The sequence is that of Anhydro-N-acetylmuramic acid kinase from Caldanaerobacter subterraneus subsp. tengcongensis (strain DSM 15242 / JCM 11007 / NBRC 100824 / MB4) (Thermoanaerobacter tengcongensis).